Here is a 726-residue protein sequence, read N- to C-terminus: Biotin--protein ligase (726 aa).

Residues 28–98 form a disordered region; it reads EVKDQVSNKQ…SDRGGGPVEH (71 aa). Residues 43–75 are compositionally biased toward basic and acidic residues; that stretch reads PKPEPSLEIKPEQDGMEHVGRDDPKALGEEPKQ. Residues serine 147 and serine 299 each carry the phosphoserine modification. The 190-residue stretch at 463–652 folds into the BPL/LPL catalytic domain; that stretch reads KQLGKVILFA…VLEKLIKEFQ (190 aa).

The protein belongs to the biotin--protein ligase family. As to quaternary structure, monomer. As to expression, widely expressed. Mostly expressed in muscle, placenta and to a lower extent in the brain, kidney, pancreas, liver and lung.

The protein resides in the cytoplasm. The protein localises to the mitochondrion. It catalyses the reaction apo-[methylmalonyl-CoA:pyruvate carboxytransferase] + biotin + ATP = holo-[methylmalonyl-CoA:pyruvate carboxytransferase] + AMP + diphosphate + H(+). The enzyme catalyses apo-[propionyl-CoA:carbon-dioxide ligase (ADP-forming)] + biotin + ATP = holo-[propionyl-CoA:carbon-dioxide ligase (ADP-forming)] + AMP + diphosphate + H(+). The catalysed reaction is apo-[3-methylcrotonoyl-CoA:carbon-dioxide ligase (ADP-forming)] + biotin + ATP = holo-[3-methylcrotonoyl-CoA:carbon-dioxide ligase (ADP-forming)] + AMP + diphosphate + H(+). It carries out the reaction biotin + L-lysyl-[protein] + ATP = N(6)-biotinyl-L-lysyl-[protein] + AMP + diphosphate + H(+). Functionally, biotin--protein ligase catalyzing the biotinylation of the 4 biotin-dependent carboxylases acetyl-CoA-carboxylase, pyruvate carboxylase, propionyl-CoA carboxylase, and methylcrotonyl-CoA carboxylase. This Homo sapiens (Human) protein is Biotin--protein ligase.